The primary structure comprises 537 residues: 2-succinyl-5-enolpyruvyl-6-hydroxy-3-cyclohexene-1-carboxylate synthase (537 aa).

It belongs to the TPP enzyme family. MenD subfamily. Homodimer. Mg(2+) serves as cofactor. Mn(2+) is required as a cofactor. It depends on thiamine diphosphate as a cofactor.

The enzyme catalyses isochorismate + 2-oxoglutarate + H(+) = 5-enolpyruvoyl-6-hydroxy-2-succinyl-cyclohex-3-ene-1-carboxylate + CO2. It participates in quinol/quinone metabolism; 1,4-dihydroxy-2-naphthoate biosynthesis; 1,4-dihydroxy-2-naphthoate from chorismate: step 2/7. The protein operates within quinol/quinone metabolism; menaquinone biosynthesis. In terms of biological role, catalyzes the thiamine diphosphate-dependent decarboxylation of 2-oxoglutarate and the subsequent addition of the resulting succinic semialdehyde-thiamine pyrophosphate anion to isochorismate to yield 2-succinyl-5-enolpyruvyl-6-hydroxy-3-cyclohexene-1-carboxylate (SEPHCHC). The protein is 2-succinyl-5-enolpyruvyl-6-hydroxy-3-cyclohexene-1-carboxylate synthase of Nocardioides sp. (strain ATCC BAA-499 / JS614).